A 381-amino-acid polypeptide reads, in one-letter code: Phosphatidyl-myo-inositol mannosyltransferase (381 aa).

GDP-alpha-D-mannose contacts are provided by Tyr-9 and Gly-16. A 1,2-diacyl-sn-glycero-3-phospho-(1D-myo-inositol)-binding positions include Gln-18, 69-70 (FN), and Arg-75. GDP-alpha-D-mannose-binding positions include Arg-204, 209 to 210 (RK), 251 to 253 (LDD), Arg-256, 274 to 278 (ESFGI), and Glu-282.

Belongs to the glycosyltransferase group 1 family. Glycosyltransferase 4 subfamily. As to quaternary structure, monomer. Mg(2+) is required as a cofactor.

The protein resides in the cell membrane. It catalyses the reaction a 1,2-diacyl-sn-glycero-3-phospho-(1D-myo-inositol) + GDP-alpha-D-mannose = a 1,2-diacyl-sn-glycero-3-phospho-[alpha-D-mannopyranosyl-(1&lt;-&gt;6)-D-myo-inositol] + GDP + H(+). It functions in the pathway phospholipid metabolism; phosphatidylinositol metabolism. Its function is as follows. Involved in the biosynthesis of phosphatidyl-myo-inositol mannosides (PIM) which are early precursors in the biosynthesis of lipomannans (LM) and lipoarabinomannans (LAM). Catalyzes the addition of a mannosyl residue from GDP-D-mannose (GDP-Man) to the position 2 of the carrier lipid phosphatidyl-myo-inositol (PI) to generate a phosphatidyl-myo-inositol bearing an alpha-1,2-linked mannose residue (PIM1). The polypeptide is Phosphatidyl-myo-inositol mannosyltransferase (Propionibacterium freudenreichii subsp. shermanii (strain ATCC 9614 / DSM 4902 / CIP 103027 / NCIMB 8099 / CIRM-BIA1)).